The primary structure comprises 340 residues: Guanine nucleotide-binding protein G(I)/G(S)/G(T) subunit beta-1 (340 aa).

Position 2 is an N-acetylserine (Ser2). Residue Ser2 is modified to Phosphoserine. 7 WD repeats span residues 46–94 (RTRR…HAIP), 95–140 (LRSS…RELA), 141–181 (GHTG…TTFT), 182–223 (GHTG…QTFT), 224–267 (GHES…YSHD), 268–309 (NIIC…GVLA), and 310–340 (GHDN…KIWN). His266 carries the phosphohistidine modification.

The protein belongs to the WD repeat G protein beta family. In terms of assembly, g proteins are composed of 3 units, alpha, beta and gamma. The heterodimer formed by GNB1 and GNG2 interacts with ARHGEF5. The heterodimer formed by GNB1 and GNG2 interacts with GRK2. Forms a complex with GNAO1 and GNG3. Interacts with ARHGEF18 and RASD2. Forms complexes with TAS2R14 and G-proteins; these complexes play a role in the perception of bitterness. Component of the TAS2R14-GNAI1 complex, consisting of TAS2R14, GNAI1, GNB1 and GNG2. Component of the TAS2R14-GNAT3 complex, consisting of TAS2R14, GNAT3, GNB1 and GNG2. Component of the TAS2R14-GNAS2 complex, consisting of TAS2R14, GNAS2, GNB1 and GNG2. Phosphorylation at His-266 by NDKB contributes to G protein activation by increasing the high energetic phosphate transfer onto GDP.

Guanine nucleotide-binding proteins (G proteins) are involved as a modulator or transducer in various transmembrane signaling systems. The beta and gamma chains are required for the GTPase activity, for replacement of GDP by GTP, and for G protein-effector interaction. The sequence is that of Guanine nucleotide-binding protein G(I)/G(S)/G(T) subunit beta-1 (GNB1) from Bos taurus (Bovine).